Here is a 174-residue protein sequence, read N- to C-terminus: Chorion protein S18 (174 aa).

The N-terminal stretch at 1–17 (MMKFMCIFICAVAAVSA) is a signal peptide. Residues 154–165 (AAAASSSVAGVA) are compositionally biased toward low complexity. The segment at 154–174 (AAAASSSVAGVAKKGYRKSSY) is disordered.

The protein belongs to the chorion protein S15/S18 family.

Its subcellular location is the secreted. In terms of biological role, chorion membrane (egg shell) protein; plays a role in protecting the egg from the environment. This chain is Chorion protein S18 (Cp18), found in Drosophila subobscura (Fruit fly).